A 239-amino-acid chain; its full sequence is Cyclo(L-leucyl-L-phenylalanyl) synthase (239 aa).

Serine 37 functions as the Nucleophile in the catalytic mechanism. Substrate-binding positions include asparagine 40, 178–182 (YVLAE), and tyrosine 202.

The protein belongs to the CDPS family. In terms of assembly, monomer.

The enzyme catalyses L-phenylalanyl-tRNA(Phe) + L-leucyl-tRNA(Leu) = cyclo(L-phenylalanyl-L-leucyl) + tRNA(Phe) + tRNA(Leu) + H(+). In terms of biological role, involved in the biosynthesis of albonoursin (cyclo[(alpha,beta-dehydro-Phe)-(alpha,beta-dehydro-Leu)]), an antibacterial peptide. It uses activated amino acids in the form of aminoacyl-tRNAs (aa-tRNAs) as substrates to catalyze the ATP-independent formation of cyclodipeptides which are intermediates in diketopiperazine (DKP) biosynthetic pathways. Catalyzes the formation of cyclo(L-Phe-L-Leu) (cFL) as major products from L-L-phenylalanyl-tRNA(Phe) and L-leucyl-tRNA(Leu). AlbC can also incorporate various nonpolar residues, such as L-phenylalanine, L-leucine, L-tyrosine and L-methionine, and to a much lesser extent L-alanine and L-valine, into cyclodipeptides. Indeed, ten possible cyclodipeptides composed of L-phenylalanine, L-leucine, L-tyrosine and L-methionine are all synthesized to detectable amounts by AlbC. The protein is Cyclo(L-leucyl-L-phenylalanyl) synthase (albC) of Streptomyces noursei (Streptomyces albulus).